Here is a 110-residue protein sequence, read N- to C-terminus: Phosphoribosyl-ATP pyrophosphatase (110 aa).

Belongs to the PRA-PH family.

Its subcellular location is the cytoplasm. It carries out the reaction 1-(5-phospho-beta-D-ribosyl)-ATP + H2O = 1-(5-phospho-beta-D-ribosyl)-5'-AMP + diphosphate + H(+). It functions in the pathway amino-acid biosynthesis; L-histidine biosynthesis; L-histidine from 5-phospho-alpha-D-ribose 1-diphosphate: step 2/9. The sequence is that of Phosphoribosyl-ATP pyrophosphatase (hisE) from Azotobacter chroococcum mcd 1.